Here is a 201-residue protein sequence, read N- to C-terminus: Large ribosomal subunit protein uL4 (201 aa).

The interval 42-67 (GNSAQKTRSEVSGGGKKPWNQKGTGR) is disordered.

It belongs to the universal ribosomal protein uL4 family. As to quaternary structure, part of the 50S ribosomal subunit.

Functionally, one of the primary rRNA binding proteins, this protein initially binds near the 5'-end of the 23S rRNA. It is important during the early stages of 50S assembly. It makes multiple contacts with different domains of the 23S rRNA in the assembled 50S subunit and ribosome. In terms of biological role, forms part of the polypeptide exit tunnel. In Legionella pneumophila (strain Paris), this protein is Large ribosomal subunit protein uL4.